The sequence spans 255 residues: Acetylglutamate kinase (255 aa).

Residues 40–41 (GG), Arg-62, and Asn-153 each bind substrate.

It belongs to the acetylglutamate kinase family. ArgB subfamily.

Its subcellular location is the cytoplasm. The catalysed reaction is N-acetyl-L-glutamate + ATP = N-acetyl-L-glutamyl 5-phosphate + ADP. The protein operates within amino-acid biosynthesis; L-arginine biosynthesis; N(2)-acetyl-L-ornithine from L-glutamate: step 2/4. Functionally, catalyzes the ATP-dependent phosphorylation of N-acetyl-L-glutamate. The protein is Acetylglutamate kinase of Bacillus thuringiensis subsp. konkukian (strain 97-27).